Here is a 24-residue protein sequence, read N- to C-terminus: Brevinin-1CSa (24 aa).

Cys18 and Cys24 are oxidised to a cystine.

As to expression, expressed by the skin glands.

The protein resides in the secreted. The protein localises to the target cell membrane. Its function is as follows. Antibacterial peptide. Has activity against the Gram-positive bacterium S.aureus (MIC=2 uM) and the Gram-negative bacterium E.coli (MIC=32 uM). Has a strong hemolytic activity (LC(50)=5 uM). The protein is Brevinin-1CSa of Rana cascadae (Cascades frog).